A 247-amino-acid polypeptide reads, in one-letter code: Large ribosomal subunit protein uL30z (247 aa).

The protein belongs to the universal ribosomal protein uL30 family.

The protein is Large ribosomal subunit protein uL30z (RPL7A) of Arabidopsis thaliana (Mouse-ear cress).